The following is a 370-amino-acid chain: MTNANVDATPLTTKPSQDGFYMPAEWAAQQAVWMIWPYRPDNWRSAGAYAQATFAKVADAIGAATPVYMGVPKAFLAEAKTVMPSHVTLVEMDSNDCWARDTGPTVVVNDNGECRGVDWGFNAWGGHNGGLYFPWDKDEQVAQQMLKQHGFARYSAPLILEGGSIHVDGEGTCMTSAECLLNANRNPDLTKEQIEDLLRDYLNVKQFIWLQDGVYMDETDGHIDNMCCFARPGEVILHWTDDETDPQYSRSKAAFDVLQNTVDAQGRKLKIHLLPQPGPLYCTEEESKGVTEGTGVPRTAGERLAGSYVNFLITNNRIVFPLLDPATDDIAAQKLQEIFPEYEIVGVPAREILLGGGNIHCITQQIPSGK.

The active-site Amidino-cysteine intermediate is Cys361.

It belongs to the agmatine deiminase family.

It carries out the reaction agmatine + H2O = N-carbamoylputrescine + NH4(+). The sequence is that of Putative agmatine deiminase from Shewanella baltica (strain OS223).